Reading from the N-terminus, the 320-residue chain is ATP-dependent 6-phosphofructokinase (320 aa).

Gly-11 is an ATP binding site. 21–25 (RAVTK) serves as a coordination point for ADP. ATP is bound by residues 72 to 73 (RF) and 102 to 105 (GDGS). Asp-103 is a Mg(2+) binding site. Position 125-127 (125-127 (TID)) interacts with substrate. Residue Asp-127 is the Proton acceptor of the active site. Arg-154 serves as a coordination point for ADP. Substrate contacts are provided by residues Arg-162 and 169–171 (MGR). Residues 185-187 (GAD) and 213-215 (KDH) contribute to the ADP site. Residues Glu-222, Arg-243, and 249 to 252 (HMQR) contribute to the substrate site.

This sequence belongs to the phosphofructokinase type A (PFKA) family. ATP-dependent PFK group I subfamily. Prokaryotic clade 'B1' sub-subfamily. In terms of assembly, homotetramer. The cofactor is Mg(2+).

It localises to the cytoplasm. It catalyses the reaction beta-D-fructose 6-phosphate + ATP = beta-D-fructose 1,6-bisphosphate + ADP + H(+). It functions in the pathway carbohydrate degradation; glycolysis; D-glyceraldehyde 3-phosphate and glycerone phosphate from D-glucose: step 3/4. With respect to regulation, allosterically activated by ADP and other diphosphonucleosides, and allosterically inhibited by phosphoenolpyruvate. In terms of biological role, catalyzes the phosphorylation of D-fructose 6-phosphate to fructose 1,6-bisphosphate by ATP, the first committing step of glycolysis. The chain is ATP-dependent 6-phosphofructokinase from Lactobacillus helveticus (strain DPC 4571).